A 245-amino-acid polypeptide reads, in one-letter code: Purine nucleoside phosphorylase (245 aa).

His-8 provides a ligand contact to a purine D-ribonucleoside. Residues 24–28, Arg-46, and 89–92 each bind phosphate; these read GDPGR and RAGS. A purine D-ribonucleoside is bound at residue 184–185; it reads ME. Asp-207 acts as the Proton donor in catalysis.

This sequence belongs to the PNP/MTAP phosphorylase family. As to quaternary structure, homohexamer; trimer of homodimers.

It carries out the reaction inosine + phosphate = alpha-D-ribose 1-phosphate + hypoxanthine. It catalyses the reaction guanosine + phosphate = alpha-D-ribose 1-phosphate + guanine. The catalysed reaction is 2'-deoxyguanosine + phosphate = 2-deoxy-alpha-D-ribose 1-phosphate + guanine. The enzyme catalyses 2'-deoxyinosine + phosphate = 2-deoxy-alpha-D-ribose 1-phosphate + hypoxanthine. It participates in purine metabolism; purine nucleoside salvage. Functionally, as part of the purine salvage pathway, catalyzes the phosphorolytic breakdown of the N-glycosidic bond in the beta-(deoxy)ribonucleoside molecules, with the formation of the corresponding free purine bases and pentose-1-phosphate. Preferentially acts on inosine and guanosine, and to a lesser extent on 2'-deoxyinosine and 2'-deoxyguanosine. The sequence is that of Purine nucleoside phosphorylase from Plasmodium vivax (strain Salvador I).